The chain runs to 296 residues: Chondrolectin (296 aa).

A signal peptide spans 1-20 (MRATLRILCALTFLVSCSRG). Over 21–238 (ARVVSGQTVC…RLIIAGPSSM (218 aa)) the chain is Extracellular. The C-type lectin domain maps to 38–187 (CYKIAYFKDV…CNMKHNFICK (150 aa)). The span at 197 to 221 (VQSDRPGGHDVDLSTEDKEDRRTPP) shows a compositional bias: basic and acidic residues. The tract at residues 197–229 (VQSDRPGGHDVDLSTEDKEDRRTPPTDEDESPR) is disordered. A helical transmembrane segment spans residues 239-266 (LLIYVIIPTIPLLLLILVASGTCCFQML). Topologically, residues 267–296 (SKSKPRTKTSVNQSTLWISKTPKIDSGMEV) are cytoplasmic.

In terms of tissue distribution, expressed in developing motor neurons.

The protein localises to the membrane. Plays a role in the development of the nervous system such as in neurite outgrowth and elongation. Involved in motor axon growth and guidance. Required for correct interactions of motor axons with the horizontal myoseptum. The chain is Chondrolectin (chodl) from Danio rerio (Zebrafish).